The chain runs to 314 residues: Glycerol-1-phosphate dehydrogenase [NAD(P)+] (314 aa).

Residues 52-56 (GKPLD) and 74-77 (TSAS) each bind NAD(+). Asp79 contacts substrate. Ser83 serves as a coordination point for NAD(+). A substrate-binding site is contributed by Asp131. Zn(2+) contacts are provided by Asp131 and His211. His215 is a substrate binding site. His231 contacts Zn(2+).

This sequence belongs to the glycerol-1-phosphate dehydrogenase family. The cofactor is Zn(2+).

It localises to the cytoplasm. The enzyme catalyses sn-glycerol 1-phosphate + NAD(+) = dihydroxyacetone phosphate + NADH + H(+). It carries out the reaction sn-glycerol 1-phosphate + NADP(+) = dihydroxyacetone phosphate + NADPH + H(+). It functions in the pathway membrane lipid metabolism; glycerophospholipid metabolism. Catalyzes the NAD(P)H-dependent reduction of dihydroxyacetonephosphate (DHAP or glycerone phosphate) to glycerol 1-phosphate (G1P). The G1P thus generated is used as the glycerophosphate backbone of phospholipids in the cellular membranes of Archaea. The polypeptide is Glycerol-1-phosphate dehydrogenase [NAD(P)+] (Korarchaeum cryptofilum (strain OPF8)).